The chain runs to 323 residues: Acetyl-coenzyme A carboxylase carboxyl transferase subunit alpha (323 aa).

Positions 40-293 constitute a CoA carboxyltransferase C-terminal domain; sequence LSEKSLQLTK…RKALSDSLKT (254 aa).

This sequence belongs to the AccA family. Acetyl-CoA carboxylase is a heterohexamer composed of biotin carboxyl carrier protein (AccB), biotin carboxylase (AccC) and two subunits each of ACCase subunit alpha (AccA) and ACCase subunit beta (AccD).

Its subcellular location is the cytoplasm. The enzyme catalyses N(6)-carboxybiotinyl-L-lysyl-[protein] + acetyl-CoA = N(6)-biotinyl-L-lysyl-[protein] + malonyl-CoA. The protein operates within lipid metabolism; malonyl-CoA biosynthesis; malonyl-CoA from acetyl-CoA: step 1/1. In terms of biological role, component of the acetyl coenzyme A carboxylase (ACC) complex. First, biotin carboxylase catalyzes the carboxylation of biotin on its carrier protein (BCCP) and then the CO(2) group is transferred by the carboxyltransferase to acetyl-CoA to form malonyl-CoA. The chain is Acetyl-coenzyme A carboxylase carboxyl transferase subunit alpha from Polynucleobacter asymbioticus (strain DSM 18221 / CIP 109841 / QLW-P1DMWA-1) (Polynucleobacter necessarius subsp. asymbioticus).